We begin with the raw amino-acid sequence, 115 residues long: Aspartate 1-decarboxylase (115 aa).

The Schiff-base intermediate with substrate; via pyruvic acid role is filled by Ser-25. A Pyruvic acid (Ser) modification is found at Ser-25. Thr-57 contributes to the substrate binding site. Tyr-58 serves as the catalytic Proton donor. A substrate-binding site is contributed by 72 to 74 (GAA).

Belongs to the PanD family. As to quaternary structure, heterooctamer of four alpha and four beta subunits. Pyruvate is required as a cofactor. In terms of processing, is synthesized initially as an inactive proenzyme, which is activated by self-cleavage at a specific serine bond to produce a beta-subunit with a hydroxyl group at its C-terminus and an alpha-subunit with a pyruvoyl group at its N-terminus.

It localises to the cytoplasm. It catalyses the reaction L-aspartate + H(+) = beta-alanine + CO2. It functions in the pathway cofactor biosynthesis; (R)-pantothenate biosynthesis; beta-alanine from L-aspartate: step 1/1. Its function is as follows. Catalyzes the pyruvoyl-dependent decarboxylation of aspartate to produce beta-alanine. In Campylobacter fetus subsp. fetus (strain 82-40), this protein is Aspartate 1-decarboxylase.